We begin with the raw amino-acid sequence, 182 residues long: uncharacterized protein (182 aa).

The next 2 helical transmembrane spans lie at 58–78 (ILFG…YVVY) and 81–101 (PVSI…IIIW).

It to M.jannaschii MJ0803.

It is found in the cell membrane. This is an uncharacterized protein from Methanocaldococcus jannaschii (strain ATCC 43067 / DSM 2661 / JAL-1 / JCM 10045 / NBRC 100440) (Methanococcus jannaschii).